A 664-amino-acid chain; its full sequence is Delta-like protein C (664 aa).

A signal peptide spans 1–20; that stretch reads MARVLLTCFFILISSHLGKS. At 21–511 the chain is on the extracellular side; it reads SGVFELKVLS…VNSPALPAAL (491 aa). Residues 154-198 form the DSL domain; that stretch reads VVCDEFYHGEECSDFCRPRNDTFGHFNCDAAGNRICLPGWKGDYC. 27 cysteine pairs are disulfide-bonded: cysteine 156/cysteine 165, cysteine 169/cysteine 181, cysteine 189/cysteine 198, cysteine 203/cysteine 214, cysteine 207/cysteine 220, cysteine 222/cysteine 231, cysteine 234/cysteine 245, cysteine 240/cysteine 251, cysteine 253/cysteine 262, cysteine 269/cysteine 281, cysteine 275/cysteine 291, cysteine 293/cysteine 302, cysteine 309/cysteine 320, cysteine 314/cysteine 329, cysteine 331/cysteine 340, cysteine 347/cysteine 358, cysteine 352/cysteine 368, cysteine 370/cysteine 379, cysteine 386/cysteine 397, cysteine 391/cysteine 406, cysteine 408/cysteine 417, cysteine 424/cysteine 435, cysteine 429/cysteine 444, cysteine 446/cysteine 455, cysteine 462/cysteine 473, cysteine 467/cysteine 482, and cysteine 484/cysteine 493. An N-linked (GlcNAc...) asparagine glycan is attached at asparagine 173. EGF-like domains lie at 199–232, 233–263, and 265–303; these read TEPI…PLCD, ECTR…LFCN, and DLNF…KNCE. Positions 305–341 constitute an EGF-like 4; calcium-binding domain; that stretch reads ETNECDSNPCKNGGSCNDQENDYTCTCPQGFYGKNCE. EGF-like domains follow at residues 343–380 and 382–418; these read SAMT…SNCE and KIDR…SRCE. The EGF-like 7; calcium-binding domain occupies 420–456; that stretch reads NIDDCSSNPCQNAGTCVDGINGYTCTCTLGFSGKDCR. The EGF-like 8 domain maps to 458 to 494; the sequence is RSDACSFMPCQNGGTCYTHFSGPVCQCPAGFMGTQCE. A helical membrane pass occupies residues 512-532; the sequence is IVSFTLGLITLTLVICAAIVV. Residues 533–664 are Cytoplasmic-facing; that stretch reads LRQMRQNHKA…IEQRVFATEV (132 aa).

Post-translationally, ubiquitinated by mib, leading to its endocytosis and subsequent degradation. As to expression, strongly expressed in the early retina, where it precedes other delta proteins. Also expressed in cranial ganglia, in sensory epithelia including ear and lateral line and in scattered epidermal cells. In the mesoderm, expression is visible by 50% epiboly; it is expressed subsequently in the tail bud, in stripes in the presomitic mesoderm and in the posterior half of each somite. Also expressed in notochord, blood vessels and pronephros. In contrast to other delta proteins, it is not expressed in the majority of nascent primary neurons. In somites, it marks the posterior part of each formed somite, while deltaD (dld) marks the anterior part.

Its subcellular location is the membrane. Functionally, acts as a ligand for Notch receptors and is involved in somitogenesis. Can activate Notch receptors. Required in somite segmentation to keep the oscillations of neighboring presomitic mesoderm cells synchronized. The sequence is that of Delta-like protein C (dlc) from Danio rerio (Zebrafish).